Reading from the N-terminus, the 349-residue chain is Phloroglucinol synthase (349 aa).

Cysteine 138 is a catalytic residue.

This sequence belongs to the thiolase-like superfamily. Chalcone/stilbene synthases family.

It carries out the reaction 3 malonyl-CoA + 3 H(+) = 1,3,5-trihydroxybenzene + 3 CO2 + 3 CoA. It functions in the pathway antibiotic biosynthesis. Functionally, type III polyketide synthase that catalyzes the synthesis of phloroglucinol from three molecules of malonyl-CoA. In addition to its ability to produce phloroglucinol from malonyl-CoA, it exhibits broad substrate specificity, accepting C4-C12 aliphatic acyl-CoAs and phenylacetyl-CoA as the starters to form C6-polyoxoalkylated alpha-pyrones from sequential condensation with malonyl-CoA. The protein is Phloroglucinol synthase of Pseudomonas fluorescens (strain ATCC BAA-477 / NRRL B-23932 / Pf-5).